A 609-amino-acid polypeptide reads, in one-letter code: Major facilitator superfamily domain-containing protein 6-like protein A (609 aa).

2 consecutive transmembrane segments (helical) span residues L41 to L61 and F78 to P98. The segment at S201–S241 is disordered. Residues V207 to Y230 are compositionally biased toward polar residues. A run of 9 helical transmembrane segments spans residues I265 to W285, L307 to D327, V340 to L360, I388 to F408, E420 to F440, W452 to W472, W475 to I495, L513 to I535, and A541 to V561.

This sequence belongs to the major facilitator superfamily. MFSD6 family.

It is found in the membrane. The protein is Major facilitator superfamily domain-containing protein 6-like protein A (mfsd6l-a) of Xenopus laevis (African clawed frog).